Here is a 359-residue protein sequence, read N- to C-terminus: DNA integrity scanning protein DisA (359 aa).

A DAC domain is found at 10–148; that stretch reads ELDLLDIVQF…GNRRYTLKDI (139 aa). ATP is bound by residues glycine 77, leucine 95, and 108–112; that span reads MRHRT.

The protein belongs to the DisA family. As to quaternary structure, homooctamer. The cofactor is Mg(2+).

It catalyses the reaction 2 ATP = 3',3'-c-di-AMP + 2 diphosphate. Participates in a DNA-damage check-point that is active prior to asymmetric division when DNA is damaged. DisA forms globular foci that rapidly scan along the chromosomes during sporulation, searching for lesions. When a lesion is present, DisA pauses at the lesion site. This triggers a cellular response that culminates in a temporary block in sporulation initiation. In terms of biological role, also has diadenylate cyclase activity, catalyzing the condensation of 2 ATP molecules into cyclic di-AMP (c-di-AMP). c-di-AMP acts as a signaling molecule that couples DNA integrity with progression of sporulation. The rise in c-di-AMP level generated by DisA while scanning the chromosome, operates as a positive signal that advances sporulation; upon encountering a lesion, the DisA focus arrests at the damaged site and halts c-di-AMP synthesis. This is DNA integrity scanning protein DisA from Bacillus pumilus (strain SAFR-032).